The primary structure comprises 1066 residues: UPF0182 protein BL1029 (1066 aa).

The tract at residues 12 to 74 (GNGGDSRRNN…KPASGGSGGS (63 aa)) is disordered. Positions 44–61 (NAGPSGSSRPPRGPANPR) are enriched in low complexity. 7 helical membrane passes run 77–97 (SKILIGVVLALAIIVGLFFGL), 126–146 (LWVAYALLMALTGFVSAWLAI), 179–199 (VAVVISLIVGVIFGSQFNANW), 235–255 (VLAAVAMLLGVGLVFSVVTHV), 282–302 (LGIWLMLNMFAWAVRQMIGVF), 326–346 (VTFIMAALTAILGVVLGIWLM), and 372–392 (VTSIAVVVVVGLVLTVAWPVL). Residues 977–1044 (DSGAAAGDAE…SQSAMKNGDW (68 aa)) are disordered. Residues 989 to 998 (SGDQSGSDTN) are compositionally biased toward polar residues. Residues 1003–1016 (GTTDGKSDSGSSSD) show a composition bias toward low complexity.

Belongs to the UPF0182 family.

The protein localises to the cell membrane. The sequence is that of UPF0182 protein BL1029 from Bifidobacterium longum (strain NCC 2705).